A 121-amino-acid chain; its full sequence is Large ribosomal subunit protein bL12 (121 aa).

It belongs to the bacterial ribosomal protein bL12 family. Homodimer. Part of the ribosomal stalk of the 50S ribosomal subunit. Forms a multimeric L10(L12)X complex, where L10 forms an elongated spine to which 2 to 4 L12 dimers bind in a sequential fashion. Binds GTP-bound translation factors.

In terms of biological role, forms part of the ribosomal stalk which helps the ribosome interact with GTP-bound translation factors. Is thus essential for accurate translation. This chain is Large ribosomal subunit protein bL12, found in Pectobacterium carotovorum subsp. carotovorum (strain PC1).